The primary structure comprises 576 residues: V-type ATP synthase alpha chain (576 aa).

238–245 lines the ATP pocket; it reads GPFGAGKT.

This sequence belongs to the ATPase alpha/beta chains family.

The enzyme catalyses ATP + H2O + 4 H(+)(in) = ADP + phosphate + 5 H(+)(out). Functionally, produces ATP from ADP in the presence of a proton gradient across the membrane. The V-type alpha chain is a catalytic subunit. The sequence is that of V-type ATP synthase alpha chain from Borrelia recurrentis (strain A1).